The following is a 501-amino-acid chain: Histone deacetylase 19 (501 aa).

Residues 17–329 (RKVCYFYDPE…WCYETGVALG (313 aa)) form a histone deacetylase region. Histidine 149 serves as the catalytic Proton donor/acceptor. Residues aspartate 184, histidine 186, and aspartate 272 each contribute to the Zn(2+) site. Residues 383–501 (HAPSVPFQER…GAEQAFPPKT (119 aa)) form a disordered region. The segment covering 397–407 (ETPEVDEDQED) has biased composition (acidic residues). Phosphoserine is present on serine 416. Basic and acidic residues-rich tracts occupy residues 422 to 457 (DDRK…KGCE) and 479 to 488 (ASVKMEEEGT).

Belongs to the histone deacetylase family. HD type 1 subfamily. As to quaternary structure, interacts with SIN3, SAP18 and TPR1. Interacts with CDKE-1, MED14 and LUG. Interacts with TPL. Interacts with AHL22. Zn(2+) is required as a cofactor. Highly expressed in leaves, stems, flowers and young siliques.

The protein localises to the nucleus. The catalysed reaction is N(6)-acetyl-L-lysyl-[histone] + H2O = L-lysyl-[histone] + acetate. In terms of biological role, responsible for the deacetylation of lysine residues on the N-terminal part of the core histones (H2A, H2B, H3 and H4). Histone deacetylation gives a tag for epigenetic repression and plays an important role in transcriptional regulation, cell cycle progression and developmental events. Histone deacetylases act via the formation of large multiprotein complexes. HDA19 is involved in jasmonic acid and ethylene signaling of pathogen response. Part of a repressor complex including APETALA2 (AP2) and TOPLESS (TPL) that control the expression domains of numerous floral organ identity genes. Involved in negative regulation of salinity stress response. Represses the expression of stress tolerance-related genes, genes coding for late embryogenesis abundant (LEA) proteins that prevent protein aggregation, and positive regulators of abscisic acid (ABA) signaling, such as ABI5 and NAC019. This Arabidopsis thaliana (Mouse-ear cress) protein is Histone deacetylase 19.